Consider the following 253-residue polypeptide: Acetylglutamate kinase (253 aa).

Residues 37–38 (GG), Arg59, and Asn149 contribute to the substrate site.

It belongs to the acetylglutamate kinase family. ArgB subfamily.

The protein localises to the cytoplasm. The enzyme catalyses N-acetyl-L-glutamate + ATP = N-acetyl-L-glutamyl 5-phosphate + ADP. It participates in amino-acid biosynthesis; L-arginine biosynthesis; N(2)-acetyl-L-ornithine from L-glutamate: step 2/4. Its function is as follows. Catalyzes the ATP-dependent phosphorylation of N-acetyl-L-glutamate. This is Acetylglutamate kinase from Rubrobacter xylanophilus (strain DSM 9941 / JCM 11954 / NBRC 16129 / PRD-1).